A 989-amino-acid chain; its full sequence is Cation-chloride cotransporter 1 (989 aa).

Residues 1 to 10 (MENGEIEGAA) are compositionally biased toward acidic residues. The disordered stretch occupies residues 1 to 29 (MENGEIEGAADDGVPVPAPPNGRRYRPVG). The Cytoplasmic portion of the chain corresponds to 1–132 (MENGEIEGAA…GRPKETGPKF (132 aa)). Residues 133–153 (GTMMGVFVPCLQNILGIIYYI) traverse the membrane as a helical segment. Topologically, residues 154-167 (RFTWIVGMAGVWQS) are extracellular. Residues 168-188 (LVLVSFCGACTFLTGISLSAI) traverse the membrane as a helical segment. At 189 to 214 (ATNGAMKGGGPYYLIGRALGPEVGVS) the chain is on the cytoplasmic side. Residues 215–235 (IGLCFFLGNAVAGSMYVLGAV) traverse the membrane as a helical segment. Residues 236–280 (ETFLDAVPSAGFFKESVTVVNNTLVNGTATASTATISTPSLHDLQ) lie on the Extracellular side of the membrane. N-linked (GlcNAc...) asparagine glycosylation is found at asparagine 256 and asparagine 261. Residues 281–301 (VYGVIVTILLCFIVFGGVKII) form a helical membrane-spanning segment. At 302-304 (NKV) the chain is on the cytoplasmic side. A helical membrane pass occupies residues 305-325 (APAFLIPVLFSLLCIYLGVFI). Over 326 to 365 (APRHNAPKGITGLSITTFKDNWGSEYQRTNNAGVPDPNGS) the chain is Extracellular. The N-linked (GlcNAc...) asparagine glycan is linked to asparagine 363. A helical membrane pass occupies residues 366–386 (IYWDFNALVGLFFPAVTGIMA). The Cytoplasmic segment spans residues 387–405 (GSNRSASLKDTQRSIPIGT). The chain crosses the membrane as a helical span at residues 406-426 (LSATLTTTAMYLFSVLLFGAL). Residues 427-441 (ATREELLTDRLLTAT) are Extracellular-facing. Residues 442–462 (VAWPAPAVIYIGIILSTLGAA) form a helical membrane-spanning segment. Residues 463 to 498 (LQSLTGAPRLLAAIANDDILPVLNYFKVSEGAEPHS) are Cytoplasmic-facing. Residues 499–519 (ATLFTAFICICCVVIGNLDLI) traverse the membrane as a helical segment. The Extracellular segment spans residues 520 to 522 (TPT). Residues 523–543 (ITMFFLLCYAGVNLSCFLLDL) form a helical membrane-spanning segment. Over 544–551 (LDAPSWRP) the chain is Cytoplasmic. Residues 552–572 (RWKFHHWSLSLVGALLCVVIM) form a helical membrane-spanning segment. The Extracellular portion of the chain corresponds to 573–578 (FLISWS). A helical transmembrane segment spans residues 579–599 (FTVVSLALASLIYYYVSLKGK). The Cytoplasmic portion of the chain corresponds to 600 to 989 (AGDWGDGFKS…YRRDVVTFFT (390 aa)).

The protein belongs to the SLC12A transporter family. As to expression, expressed in roots, stems and leaves with higher expression in root and leaf tips.

It is found in the membrane. Its function is as follows. Probable cation/chloride cotransporter that may mediate potassium-chloride cotransport. Involved in plant development and K(+) and Cl(-) homeostasis. May not be involved in sodium-chloride cotransport. The polypeptide is Cation-chloride cotransporter 1 (CCC1) (Oryza sativa subsp. japonica (Rice)).